The primary structure comprises 498 residues: Cytochrome P450 monooxygenase ltmP (498 aa).

The signal sequence occupies residues 1 to 21; that stretch reads MLMLHAVPVGICLLLWYVVYG. Asn-420 carries an N-linked (GlcNAc...) asparagine glycan. Cys-435 is a heme binding site.

It belongs to the cytochrome P450 family. Heme is required as a cofactor.

Its pathway is secondary metabolite biosynthesis. Its function is as follows. Cytochrome P450 monooxygenase; part of the gene clusters that mediates the biosynthesis of lolitrems, indole-diterpene mycotoxins that are potent tremorgens in mammals, and are synthesized by clavicipitaceous fungal endophytes in association with their grass hosts. The geranylgeranyl diphosphate (GGPP) synthase ltmG is proposed to catalyze the first step in lolitrem biosynthesis. LtmG catalyzes a series of iterative condensations of isopentenyl diphosphate (IPP) with dimethylallyl diphosphate (DMAPP), geranyl diphosphate (GPP), and farnesyl diphosphate (FPP), to form GGPP. GGPP then condenses with indole-3-glycerol phosphate to form 3-geranylgeranylindole, an acyclic intermediate, to be incorporated into paxilline. Either ltmG or ltmC could be responsible for this step, as both are putative prenyl transferases. The FAD-dependent monooxygenase ltmM then catalyzes the epoxidation of the two terminal alkenes of the geranylgeranyl moiety, which is subsequently cyclized by ltmB, to paspaline. The cytochrome P450 monooxygenases ltmQ and ltmP can sequentially oxidize paspaline to terpendole E and terpendole F. Alternatively, ltmP converts paspaline to an intermediate which is oxidized by ltmQ to terpendole F. LtmF, ltmK, ltmE and ltmJ appear to be unique to the epichloe endophytes. The prenyltransferase ltmF is involved in the 27-hydroxyl-O-prenylation. The cytochrome P450 monooxygenase ltmK is required for the oxidative acetal ring formation. The multi-functional prenyltransferase ltmE is required for C20- and C21-prenylations of the indole ring of paspalanes and acts together with the cytochrome P450 monooxygenase ltmJ to yield lolitremanes by multiple oxidations and ring closures. The stereoisomer pairs of lolitriol and lolitrem N or lolitrem B and lolitrem F may be attributed to variations in the way in which ring closure can occur under the action of ltmJ. While the major product of this pathway is lolitrem B, the prenyl transferases and cytochrome P450 monooxygenases identified in this pathway have a remarkable versatility in their regio- and stereo-specificities to generate a diverse range of metabolites that are products of a metabolic grid rather than a linear pathway. The protein is Cytochrome P450 monooxygenase ltmP of Epichloe festucae var. lolii (Neotyphodium lolii).